Consider the following 188-residue polypeptide: Kininogen (188 aa).

N-linked (GlcNAc...) asparagine glycans are attached at residues Asn-36, Asn-150, and Asn-182.

In terms of processing, bradykinin is released from kininogen by kallikrein. N-glycosylated. Contains O-acetylated sialic acids as terminal elements on biantennary and triantennary N-glycans.

Functionally, inhibits papain and ficin (cysteine proteinases) but not trypsin (a serine proteinase). The chain is Kininogen from Anarhichas minor (Arctic spotted wolffish).